Consider the following 67-residue polypeptide: DNA-directed RNA polymerase subunit omega (67 aa).

This sequence belongs to the RNA polymerase subunit omega family. In terms of assembly, the RNAP catalytic core consists of 2 alpha, 1 beta, 1 beta' and 1 omega subunit. When a sigma factor is associated with the core the holoenzyme is formed, which can initiate transcription.

The enzyme catalyses RNA(n) + a ribonucleoside 5'-triphosphate = RNA(n+1) + diphosphate. Promotes RNA polymerase assembly. Latches the N- and C-terminal regions of the beta' subunit thereby facilitating its interaction with the beta and alpha subunits. The chain is DNA-directed RNA polymerase subunit omega from Cupriavidus metallidurans (strain ATCC 43123 / DSM 2839 / NBRC 102507 / CH34) (Ralstonia metallidurans).